We begin with the raw amino-acid sequence, 1444 residues long: Protein shortage in chiasmata 1 ortholog (1444 aa).

A compositionally biased stretch (low complexity) spans 1106-1117 (SITKSPQISSPQ). The disordered stretch occupies residues 1106–1129 (SITKSPQISSPQENRNQISTLSSQ).

This sequence belongs to the XPF family. Highly divergent. As to quaternary structure, interacts with TEX11. Interacts with SPO16.

The protein localises to the chromosome. ATPase required during meiosis for the formation of crossover recombination intermediates. Binds DNA: preferentially binds to single-stranded DNA and DNA branched structures. Does not show nuclease activity in vitro, but shows ATPase activity, which is stimulated by the presence of single-stranded DNA. Plays a key role in homologous recombination and crossing-over in meiotic prophase I in male and female germ cells. Required for proper synaptonemal complex assembly and homologous chromosome pairing. Requiref for recruitment TEX11 and MSH4 to recombination intermediates. This is Protein shortage in chiasmata 1 ortholog from Homo sapiens (Human).